A 398-amino-acid polypeptide reads, in one-letter code: Histone-lysine N-methyltransferase ASHR2 (398 aa).

Positions 11–270 (TLLRVAEIGG…EGREVCLSYF (260 aa)) constitute an SET domain.

It belongs to the class V-like SAM-binding methyltransferase superfamily. Histone-lysine methyltransferase family. SET2 subfamily.

It is found in the nucleus. The protein localises to the chromosome. The catalysed reaction is L-lysyl-[histone] + S-adenosyl-L-methionine = N(6)-methyl-L-lysyl-[histone] + S-adenosyl-L-homocysteine + H(+). Its function is as follows. Histone methyltransferase. This is Histone-lysine N-methyltransferase ASHR2 (ASHR2) from Arabidopsis thaliana (Mouse-ear cress).